Consider the following 139-residue polypeptide: D-ribose pyranase (139 aa).

H20 serves as the catalytic Proton donor. Substrate is bound by residues D28, H106, and Y128–N130.

This sequence belongs to the RbsD / FucU family. RbsD subfamily. In terms of assembly, homodecamer.

The protein localises to the cytoplasm. It carries out the reaction beta-D-ribopyranose = beta-D-ribofuranose. It functions in the pathway carbohydrate metabolism; D-ribose degradation; D-ribose 5-phosphate from beta-D-ribopyranose: step 1/2. In terms of biological role, catalyzes the interconversion of beta-pyran and beta-furan forms of D-ribose. The sequence is that of D-ribose pyranase from Maridesulfovibrio salexigens (strain ATCC 14822 / DSM 2638 / NCIMB 8403 / VKM B-1763) (Desulfovibrio salexigens).